A 391-amino-acid chain; its full sequence is Carbamoyl phosphate synthase small chain (391 aa).

The segment at 1 to 202 (MTQPAILVLE…AHASAGSGEE (202 aa)) is CPSase. L-glutamine-binding residues include serine 47, glycine 254, and glycine 256. A Glutamine amidotransferase type-1 domain is found at 206-391 (KVVAYDYGVK…RFVDLMAARA (186 aa)). The active-site Nucleophile is cysteine 282. Residues leucine 283, glutamine 286, asparagine 324, glycine 326, and phenylalanine 327 each contribute to the L-glutamine site. Residues histidine 366 and glutamate 368 contribute to the active site.

This sequence belongs to the CarA family. In terms of assembly, composed of two chains; the small (or glutamine) chain promotes the hydrolysis of glutamine to ammonia, which is used by the large (or ammonia) chain to synthesize carbamoyl phosphate. Tetramer of heterodimers (alpha,beta)4.

It catalyses the reaction hydrogencarbonate + L-glutamine + 2 ATP + H2O = carbamoyl phosphate + L-glutamate + 2 ADP + phosphate + 2 H(+). The enzyme catalyses L-glutamine + H2O = L-glutamate + NH4(+). The protein operates within amino-acid biosynthesis; L-arginine biosynthesis; carbamoyl phosphate from bicarbonate: step 1/1. It functions in the pathway pyrimidine metabolism; UMP biosynthesis via de novo pathway; (S)-dihydroorotate from bicarbonate: step 1/3. In terms of biological role, small subunit of the glutamine-dependent carbamoyl phosphate synthetase (CPSase). CPSase catalyzes the formation of carbamoyl phosphate from the ammonia moiety of glutamine, carbonate, and phosphate donated by ATP, constituting the first step of 2 biosynthetic pathways, one leading to arginine and/or urea and the other to pyrimidine nucleotides. The small subunit (glutamine amidotransferase) binds and cleaves glutamine to supply the large subunit with the substrate ammonia. This is Carbamoyl phosphate synthase small chain from Xanthomonas axonopodis pv. citri (strain 306).